The following is a 150-amino-acid chain: Transcriptional regulator MraZ (150 aa).

SpoVT-AbrB domains follow at residues 11–53 and 82–125; these read TYTP…PFDE and AVDQ…NKDT.

It belongs to the MraZ family. In terms of assembly, forms oligomers.

It is found in the cytoplasm. The protein localises to the nucleoid. The protein is Transcriptional regulator MraZ of Bifidobacterium longum (strain NCC 2705).